A 498-amino-acid chain; its full sequence is Beta-1,3-glucosyltransferase (498 aa).

The Cytoplasmic segment spans residues 1–6 (MRPPAC). Residues 7 to 27 (WWLLAPPALLALLTCSLAFGL) traverse the membrane as a helical; Signal-anchor for type II membrane protein segment. Residues 28-498 (ASEDTKKEVK…ETQKGFREEL (471 aa)) are Lumenal-facing. N-linked (GlcNAc...) asparagine glycosylation is present at Asn336. A Prevents secretion from ER motif is present at residues 495–498 (REEL).

The protein belongs to the glycosyltransferase 31 family. Widely expressed, with highest levels in testis and uterus.

Its subcellular location is the endoplasmic reticulum membrane. It functions in the pathway protein modification; protein glycosylation. O-glucosyltransferase that transfers glucose toward fucose with a beta-1,3 linkage. Specifically glucosylates O-linked fucosylglycan on TSP type-1 domains of proteins, thereby contributing to elongation of O-fucosylglycan. The protein is Beta-1,3-glucosyltransferase of Homo sapiens (Human).